A 911-amino-acid polypeptide reads, in one-letter code: Brevican core protein (911 aa).

Residues 1–22 (MAQLFLPLLAALVLAQAPAALA) form the signal peptide. The Ig-like V-type domain maps to 36-155 (RVRIAGDAPL…SSDAVEVKVK (120 aa)). Disulfide bonds link cysteine 57/cysteine 137, cysteine 179/cysteine 250, cysteine 203/cysteine 224, cysteine 277/cysteine 352, and cysteine 301/cysteine 322. Residue asparagine 130 is glycosylated (N-linked (GlcNAc...) asparagine). 2 consecutive Link domains span residues 157–252 (VVFL…YCYA) and 257–354 (GELF…YCFR). N-linked (GlcNAc...) asparagine glycosylation occurs at asparagine 337. A disordered region spans residues 391-641 (QLPQEATESE…PTDSASRGGV (251 aa)). Serine 418 carries the phosphoserine modification. Serine 418 carries O-linked (Xyl...) (chondroitin sulfate) serine glycosylation. Residues 454 to 478 (EEEEKYEDEEEKEEEEEEEEVEDEA) are compositionally biased toward acidic residues. O-glycosylated at two sites regions lie at residues 520 to 530 (SPLPDGESEAS) and 540 to 545 (TETLPT). The O-glycosylated at one site stretch occupies residues 569–575 (TGGPELS). Over residues 612 to 627 (EDNSGRTAPAGTSVQA) the composition is skewed to polar residues. Residue alanine 646 is the site of GPI-anchor amidated alanine attachment. The region spanning 646 to 682 (ASGDCVPSPCHNGGTCLEEEEGVRCLCLPGYGGDLCD) is the EGF-like domain. Intrachain disulfides connect cysteine 650/cysteine 661, cysteine 655/cysteine 670, cysteine 672/cysteine 681, cysteine 688/cysteine 699, cysteine 716/cysteine 808, cysteine 784/cysteine 800, cysteine 815/cysteine 858, and cysteine 844/cysteine 871. The region spanning 695 to 809 (FQGACYKHFS…CNYHLSYTCK (115 aa)) is the C-type lectin domain. The Sushi domain maps to 813–873 (VSCGPPPELP…WEAPQISCVP (61 aa)). Serine 905 and serine 906 each carry an O-linked (GalNAc...) serine glycan.

The protein belongs to the aggrecan/versican proteoglycan family. Interacts with TNR. O-glycosylated; contains chondroitin sulfate. O-glycosylated with a core 1 or possibly core 8 glycan. In terms of tissue distribution, expressed in the retina, specifically in the inner nuclear layer, inner plexiform layer and ganglion cell layer (at protein level). Detected in cerebrospinal fluid (at protein level). Detected in urine (at protein level).

The protein resides in the secreted. It is found in the extracellular space. It localises to the extracellular matrix. Its subcellular location is the membrane. In terms of biological role, may play a role in the terminally differentiating and the adult nervous system during postnatal development. Could stabilize interactions between hyaluronan (HA) and brain proteoglycans. The protein is Brevican core protein (BCAN) of Homo sapiens (Human).